A 922-amino-acid chain; its full sequence is Cell surface glycoprotein 2 (922 aa).

A signal peptide spans 1 to 23; the sequence is MTGNSDKVRSLFLTALMVFSVFA. 7 N-linked (GlcNAc...) asparagine glycosylation sites follow: N37, N56, N110, N220, N251, N262, and N292. N307 is a glycosylation site (N-linked (GalNAc...) asparagine). N-linked (GlcNAc...) asparagine glycans are attached at residues N319, N344, N396, N437, N490, N523, N557, N574, N587, N616, N700, N717, N809, N838, and N847. The interval 816–899 is disordered; the sequence is PHQDTNGNEE…GTETTEAEGP (84 aa). A compositionally biased stretch (polar residues) spans 835-850; that stretch reads YTQNGSAVTDSANVTV. A compositionally biased stretch (acidic residues) spans 853-887; that stretch reads EEPEDTPEDTPEDTPEDTPEDTPEDTPADTPEDTP. Over residues 888-899 the composition is skewed to low complexity; sequence DTGTETTEAEGP. The helical transmembrane segment at 898–918 threads the bilayer; it reads GPGFTAAIALIALVAAALLAV. Positions 899 to 901 match the PGF sorting signal motif; that stretch reads PGF.

This sequence belongs to the halobacterial S-layer protein family. N-glycosylated on Asn-307; this N-linked glycan is a branched trisaccharide containing 2-amino-6-sulfo-2,6-dideoxy-glucose (sulfoquinovosamine). In terms of processing, O-glycosylated on Thr residues within the DTPE repeats in the C-terminal region; glycans consist of Glc-Gal disaccharides. Post-translationally, cleaved by the archaeosortase ArtA at the C-terminus, with removal of a short hydrophobic segment. Lipidation.

It is found in the secreted. The protein localises to the cell wall. Its subcellular location is the S-layer. The protein resides in the cell membrane. Its function is as follows. S-layer protein. The S-layer is a paracrystalline mono-layered assembly of proteins which coat the surface of the cell. In H.hispanica, the S-layer contains two different glycoproteins, Slg1 and Slg2, which share highly similar amino acid sequences. This chain is Cell surface glycoprotein 2, found in Haloarcula hispanica (strain ATCC 33960 / DSM 4426 / JCM 8911 / NBRC 102182 / NCIMB 2187 / VKM B-1755).